The sequence spans 229 residues: Urease accessory protein UreF (229 aa).

It belongs to the UreF family. As to quaternary structure, ureD, UreF and UreG form a complex that acts as a GTP-hydrolysis-dependent molecular chaperone, activating the urease apoprotein by helping to assemble the nickel containing metallocenter of UreC. The UreE protein probably delivers the nickel.

Its subcellular location is the cytoplasm. Required for maturation of urease via the functional incorporation of the urease nickel metallocenter. The sequence is that of Urease accessory protein UreF from Nostoc sp. (strain PCC 7120 / SAG 25.82 / UTEX 2576).